The chain runs to 541 residues: Ascorbate transporter, chloroplastic (541 aa).

A chloroplast-targeting transit peptide spans 1-28; sequence MALGGLISNRNFGSFIGSGNGCQRLGKS. 11 helical membrane-spanning segments follow: residues 133-155, 170-190, 199-219, 221-241, 263-283, 286-306, 352-372, 390-410, 430-450, 481-501, and 515-535; these read VIVL…MSIA, VGLI…LGGI, VVLG…PIAA, LGLP…GVAM, LVYS…PMLI, FGWP…FLLW, VWAL…LLTW, LLCV…GWIA, IGFL…TPAM, AGVL…FGTA, and VFKV…LFAT.

The protein belongs to the major facilitator superfamily. Sodium/anion cotransporter (TC 2.A.1.14) family. As to expression, expressed in stems, developing siliques, leaf mesophyll cells and sepals of mature flowers. Not detected in roots. Detected in palisade tissue rather than spongy tissue from the leaves.

It is found in the plastid. It localises to the chloroplast inner membrane. Insensitive to dehydroascorbate, p-isoascorbate, inorganic phosphate, glutamate, ATP, p-aminohippuric acid or tetraethylammonium. Its function is as follows. Inorganic phosphate and probable anion transporter. Ascorbate transporter bridging the chloroplast envelope. Transports ascorbate from the cytosol into the chloroplast. Requires chloride ions and the presence of an electrochemical potential across the membrane for activity. This chain is Ascorbate transporter, chloroplastic (PHT4;4), found in Arabidopsis thaliana (Mouse-ear cress).